The chain runs to 665 residues: MSTLLIPQDTIAHTFDEAVASESNLRIDEVPENYLERFIHPSEPENFEFYSLRDSDIPSKRIPKNGIQVFENLKYHTNSKDNLYKDQPSSGPSPMRGVANIIREYFPQYLDDLRTWCRPKSSDDSIFNDFNHEQRITQPFTEERERRLLPLIDHFLGIKPYDIVHYCDTRFYPWKLSTRADYFHNHSRDRKAHAAKSHPDFATGPTKKSYFINSHLFFDRSTVHNIKEYGFPFRPTTDSARNETLLDLWFKKVPTELLVRSHISKRDNLKVRPVYNAPMIYIRIECMLFYPLLAQARKRDCCIMYGLETIRGGMNELERISNAFNSFLLIDWSRFDHLAPFTISNFFFKKWLPTKILIDHGYAQISNYHDHVHSFSAQAQSHGIPMISKEYQTPPEATVFAKKVLNLISFLERWYRDMVFVTPDGFAYRRTHAGVPSGILMTQFIDSFVNLTILLDGLIEFGFTDEEIKQLLVFIMGDDNVIFTPWTLLKLIEFFDWFAKYTLDRFGMVINISKSAVTSIRRKIEVLGYTNNYGFPTRSISKLVGQLAYPERHVTDADMCMRAIGFAYASCAQSETFHALCKKVFQYYFAKTSINERLILKGRKAELPGMFFAYPDVSEHIRLDHFPSLSEVRILLSKFQGYLKETPFGTIPTFSTPQTLRDQTQ.

It carries out the reaction RNA(n) + a ribonucleoside 5'-triphosphate = RNA(n+1) + diphosphate. Functionally, RNA-dependent RNA polymerase which replicates the viral genome. In Atkinsonella hypoxylon (AhV), this protein is RNA-directed RNA polymerase.